The following is a 614-amino-acid chain: Zinc metalloproteinase dpy-31 (614 aa).

The signal sequence occupies residues 1 to 24; that stretch reads MSLLRCTTLLLVVVAIALPPCILG. Positions 25–150 are excised as a propeptide; the sequence is YSLHDGSRLD…KTGQRRVKRK (126 aa). Residues 150–349 form the Peptidase M12A domain; that stretch reads KFIGSDLRRW…IRLMNKIYCS (200 aa). Asn190 carries N-linked (GlcNAc...) asparagine glycosylation. Disulfide bonds link Cys193–Cys348, Cys216–Cys237, Cys352–Cys372, Cys374–Cys383, and Cys394–Cys422. His245 is a Zn(2+) binding site. Residue Glu246 is part of the active site. Residues His249 and His255 each contribute to the Zn(2+) site. The EGF-like domain maps to 344–384; sequence NKIYCSNVCSRKLPCQRGGYTDPRRCDRCRCPDGFTGQFCE. The 117-residue stretch at 394 to 510 folds into the CUB domain; it reads CGGRIQVNGG…RGFEARARAL (117 aa). N-linked (GlcNAc...) asparagine glycosylation is present at Asn461. The TSP type-1 domain occupies 513–562; that stretch reads NGQWASWSPWTPCTASCGACGSRMRTRVCSHGACAGEPVENQVCNTHPCN. Intrachain disulfides connect Cys525-Cys556, Cys529-Cys561, and Cys541-Cys546.

The cofactor is Zn(2+).

The protein localises to the secreted. Its activity is regulated as follows. Inhibited by marimastat and tripeptide hydroxamic acids. Inhibited by 1,10-phenanthroline. In terms of biological role, metalloprotease which cleaves the carboxyl terminus of procollagens to mature collagens. Probably involved in cuticular collagen maturation. The sequence is that of Zinc metalloproteinase dpy-31 from Teladorsagia circumcincta (Brown stomach worm).